The following is a 957-amino-acid chain: Glycine dehydrogenase (decarboxylating) (957 aa).

Residue Lys-708 is modified to N6-(pyridoxal phosphate)lysine.

It belongs to the GcvP family. As to quaternary structure, the glycine cleavage system is composed of four proteins: P, T, L and H. Requires pyridoxal 5'-phosphate as cofactor.

The enzyme catalyses N(6)-[(R)-lipoyl]-L-lysyl-[glycine-cleavage complex H protein] + glycine + H(+) = N(6)-[(R)-S(8)-aminomethyldihydrolipoyl]-L-lysyl-[glycine-cleavage complex H protein] + CO2. In terms of biological role, the glycine cleavage system catalyzes the degradation of glycine. The P protein binds the alpha-amino group of glycine through its pyridoxal phosphate cofactor; CO(2) is released and the remaining methylamine moiety is then transferred to the lipoamide cofactor of the H protein. The sequence is that of Glycine dehydrogenase (decarboxylating) from Escherichia coli O8 (strain IAI1).